Consider the following 117-residue polypeptide: Large ribosomal subunit protein uL24 (117 aa).

Residues 1-12 (MSKKNSQTSPQR) show a composition bias toward polar residues. Positions 1–20 (MSKKNSQTSPQRQKMHVKKG) are disordered.

Belongs to the universal ribosomal protein uL24 family. In terms of assembly, part of the 50S ribosomal subunit.

In terms of biological role, one of two assembly initiator proteins, it binds directly to the 5'-end of the 23S rRNA, where it nucleates assembly of the 50S subunit. One of the proteins that surrounds the polypeptide exit tunnel on the outside of the subunit. The chain is Large ribosomal subunit protein uL24 from Microcystis aeruginosa (strain NIES-843 / IAM M-2473).